The sequence spans 1306 residues: Receptor-type tyrosine-protein phosphatase C (1306 aa).

The first 25 residues, 1-25, serve as a signal peptide directing secretion; it reads MTMYLWLKLLAFGFAFLDTEVFVTG. The Extracellular portion of the chain corresponds to 26-577; that stretch reads QSPTPSPTGL…LHHSTSYNSK (552 aa). Residues 28–163 are disordered; it reads PTPSPTGLTT…TASTFPTDPV (136 aa). Composition is skewed to polar residues over residues 52–61 and 70–131; these read THTTAFSPAS and SETT…SGSA. N80, N92, N97, N186, N192, N199, N234, N262, N272, and N278 each carry an N-linked (GlcNAc...) asparagine glycan. Residue N286 is glycosylated (N-linked (GlcNAc...) asparagine; atypical). N-linked (GlcNAc...) asparagine glycosylation is found at N337, N380, N421, N470, N490, and N531. 2 Fibronectin type-III domains span residues 391–483 and 484–576; these read SPGE…TKSA and PPSQ…SYNS. The helical transmembrane segment at 578 to 598 threads the bilayer; it reads ALIAFLAFLIIVTSIALLVVL. Residues 599–1306 lie on the Cytoplasmic side of the membrane; that stretch reads YKIYDLHKKR…PASPALNQGS (708 aa). 2 consecutive Tyrosine-protein phosphatase domains span residues 653-912 and 944-1228; these read FLAE…LVEY and LEAE…IAST. Y683 is subject to Phosphotyrosine. Residues D821, 853 to 859, and Q897 each bind substrate; that span reads CSAGVGR. The active-site Phosphocysteine intermediate is the C853. 7 positions are modified to phosphoserine: S975, S994, S997, S1001, S1004, S1005, and S1009. The interval 993–1014 is disordered; that stretch reads MSKESEHDSDESSDDDSDSEEP. Residues 999-1012 are compositionally biased toward acidic residues; it reads HDSDESSDDDSDSE. Residue C1169 is the Phosphocysteine intermediate of the active site. The disordered stretch occupies residues 1261–1306; that stretch reads CVNPLGAPEKLPEAKEQAEGSEPTSGTEGPEHSVNGPASPALNQGS. S1299 bears the Phosphoserine mark.

The protein belongs to the protein-tyrosine phosphatase family. Receptor class 1/6 subfamily. As to quaternary structure, binds GANAB and PRKCSH. Interacts with SKAP1. Interacts with DPP4; the interaction is enhanced in an interleukin-12-dependent manner in activated lymphocytes. Interacts with CD53; this interaction stabilizes PTPRC on the membrane and is required for optimal phosphatase activity. In terms of assembly, interacts with CLEC10A. Does not interact with CLEC10A. As to quaternary structure, (Microbial infection) Interacts with human cytomegalovirus protein UL11; the interaction is required for binding of UL11 to T-cells. In terms of processing, heavily N- and O-glycosylated. As to expression, isoform 1: Detected in thymocytes. Isoform 2: Detected in thymocytes. Isoform 3: Detected in thymocytes. Isoform 4: Not detected in thymocytes. Isoform 5: Detected in thymocytes. Isoform 6: Not detected in thymocytes. Isoform 7: Detected in thymocytes. Isoform 8: Not detected in thymocytes.

The protein resides in the cell membrane. Its subcellular location is the membrane raft. The protein localises to the synapse. The enzyme catalyses O-phospho-L-tyrosyl-[protein] + H2O = L-tyrosyl-[protein] + phosphate. In terms of biological role, protein tyrosine-protein phosphatase required for T-cell activation through the antigen receptor. Acts as a positive regulator of T-cell coactivation upon binding to DPP4. The first PTPase domain has enzymatic activity, while the second one seems to affect the substrate specificity of the first one. Upon T-cell activation, recruits and dephosphorylates SKAP1 and FYN. Dephosphorylates LYN, and thereby modulates LYN activity. Interacts with CLEC10A at antigen presenting cell-T cell contact; CLEC10A on immature dendritic cells recognizes Tn antigen-carrying PTPRC/CD45 receptor on effector T cells and modulates T cell activation threshold to limit autoreactivity. Functionally, (Microbial infection) Acts as a receptor for human cytomegalovirus protein UL11 and mediates binding of UL11 to T-cells, leading to reduced induction of tyrosine phosphorylation of multiple signaling proteins upon T-cell receptor stimulation and impaired T-cell proliferation. This is Receptor-type tyrosine-protein phosphatase C from Homo sapiens (Human).